The primary structure comprises 446 residues: Trigger factor (446 aa).

Residues 163 to 248 (GDRLVIDFEG…VKEIKKKNLL (86 aa)) enclose the PPIase FKBP-type domain.

Belongs to the FKBP-type PPIase family. Tig subfamily.

The protein resides in the cytoplasm. The enzyme catalyses [protein]-peptidylproline (omega=180) = [protein]-peptidylproline (omega=0). Involved in protein export. Acts as a chaperone by maintaining the newly synthesized protein in an open conformation. Functions as a peptidyl-prolyl cis-trans isomerase. The sequence is that of Trigger factor from Natranaerobius thermophilus (strain ATCC BAA-1301 / DSM 18059 / JW/NM-WN-LF).